The following is a 130-amino-acid chain: Small ribosomal subunit protein uS9 (130 aa).

The segment at 98-130 (LKRAGLLTRDPRMKERKKPGLKKARRSPQFSKR) is disordered. Residues 111-130 (KERKKPGLKKARRSPQFSKR) show a composition bias toward basic residues.

This sequence belongs to the universal ribosomal protein uS9 family.

The protein is Small ribosomal subunit protein uS9 (rpsI) of Staphylococcus carnosus (strain TM300).